Reading from the N-terminus, the 1192-residue chain is Leucine-rich repeat receptor protein kinase EMS1 (1192 aa).

A signal peptide spans 1 to 18 (MAFLTALFLFLFFSFSSS). N47 is a glycosylation site (N-linked (GlcNAc...) asparagine). LRR repeat units lie at residues 64–87 (LGRV…EISS), 90–112 (NLRE…IWNL), 114–137 (HLQT…SELP), 138–160 (QLLY…FFIS), 163–185 (ALSS…IGKL), 187–209 (NLSN…IGNI), 235–257 (HLAK…FGEL), 259–281 (NLSI…LGNC), 283–304 (SLKS…ELSE), 330–352 (VLDS…IEDC), 354–376 (MLKH…LCGS), 378–400 (SLEA…FDGC), 402–425 (SLGE…WKLP), 426–447 (LMAL…LWKS), 449–471 (NLME…IGNA), 473–496 (SLKR…GKLT), 497–520 (SLSV…GDCT), 521–543 (SLTT…ITAL), 545–567 (QLQC…PSAY), 581–603 (HHGI…LGEC), 605–628 (VLVE…SRLT), 629–651 (NLTI…MGNS), 653–675 (KLQG…FGLL), 677–697 (SLVK…ASLG), 701–723 (ELTH…LSTM), 725–748 (KLVG…GNLT), 749–772 (QLEY…CGLP), and 773–795 (NLEF…GVCQ). Residues N171, N187, and N208 are each glycosylated (N-linked (GlcNAc...) asparagine). Residue N259 is glycosylated (N-linked (GlcNAc...) asparagine). 2 N-linked (GlcNAc...) asparagine glycosylation sites follow: N414 and N435. A glycan (N-linked (GlcNAc...) asparagine) is linked at N555. N-linked (GlcNAc...) asparagine glycosylation occurs at N629. N-linked (GlcNAc...) asparagine glycosylation is found at N682, N711, and N746. Residues 828-848 (WGIAGLMLGFTIIVFVFVFSL) traverse the membrane as a helical segment. A Phosphothreonine modification is found at T914. Residues 917 to 1192 (FSKKNIIGDG…LDVLKALKEI (276 aa)) form the Protein kinase domain. Residues 923–931 (IGDGGFGTV) and K945 contribute to the ATP site. A Phosphotyrosine modification is found at Y990. D1043 functions as the Proton acceptor in the catalytic mechanism. Residue Y1085 is modified to Phosphotyrosine.

It belongs to the protein kinase superfamily. Ser/Thr protein kinase family. As to quaternary structure, interacts with TPD1. Autophosphorylates in vitro. In terms of tissue distribution, present in young buds, open flowers and siliques but absent from mature leaves and roots. Strongly expressed in the young organ primordia, and as the anthers and ovules developed, became focused in the microsporangia and in the distal and chalazal regions of the ovule. In cv. Landsberg erecta, only expressed in the anthers of young floral buds.

Its subcellular location is the cell membrane. It carries out the reaction L-seryl-[protein] + ATP = O-phospho-L-seryl-[protein] + ADP + H(+). The enzyme catalyses L-threonyl-[protein] + ATP = O-phospho-L-threonyl-[protein] + ADP + H(+). Its function is as follows. Receptor with a serine/threonine-protein kinase activity required for the specification of the correct number of male archesporial initials and for the subsequent specification of tapetal and middle cell layer identities. In seeds, required for enhancing cell size and the rate of embryonic development. The polypeptide is Leucine-rich repeat receptor protein kinase EMS1 (Arabidopsis thaliana (Mouse-ear cress)).